The chain runs to 178 residues: Endoribonuclease YbeY (178 aa).

Zn(2+) is bound by residues His-118, His-122, and His-128.

The protein belongs to the endoribonuclease YbeY family. Zn(2+) serves as cofactor.

It localises to the cytoplasm. Its function is as follows. Single strand-specific metallo-endoribonuclease involved in late-stage 70S ribosome quality control and in maturation of the 3' terminus of the 16S rRNA. This chain is Endoribonuclease YbeY, found in Mycobacterium leprae (strain Br4923).